The chain runs to 662 residues: UvrABC system protein B (662 aa).

In terms of domain architecture, Helicase ATP-binding spans threonine 25–proline 414. Residue glycine 38–threonine 45 participates in ATP binding. Residues tyrosine 91–isoleucine 114 carry the Beta-hairpin motif. The 163-residue stretch at glutamine 430–isoleucine 592 folds into the Helicase C-terminal domain. Positions lysine 622–alanine 657 constitute a UVR domain.

This sequence belongs to the UvrB family. Forms a heterotetramer with UvrA during the search for lesions. Interacts with UvrC in an incision complex.

It is found in the cytoplasm. Functionally, the UvrABC repair system catalyzes the recognition and processing of DNA lesions. A damage recognition complex composed of 2 UvrA and 2 UvrB subunits scans DNA for abnormalities. Upon binding of the UvrA(2)B(2) complex to a putative damaged site, the DNA wraps around one UvrB monomer. DNA wrap is dependent on ATP binding by UvrB and probably causes local melting of the DNA helix, facilitating insertion of UvrB beta-hairpin between the DNA strands. Then UvrB probes one DNA strand for the presence of a lesion. If a lesion is found the UvrA subunits dissociate and the UvrB-DNA preincision complex is formed. This complex is subsequently bound by UvrC and the second UvrB is released. If no lesion is found, the DNA wraps around the other UvrB subunit that will check the other stand for damage. The chain is UvrABC system protein B from Rickettsia prowazekii (strain Madrid E).